The following is a 1181-amino-acid chain: HEAT repeat-containing protein 6 (1181 aa).

One copy of the HEAT 1 repeat lies at 159–198 (LELLGETGLLMKLSDLAQSDPEVRRAAVHCMANLCLSVPG). Disordered regions lie at residues 294–347 (DGRT…PVTG) and 371–407 (LDGSGAAGKDGVSSPFSSSSWKRVSSSESDFSDAEGG). Positions 300-312 (KPQQSESSASRPT) are enriched in polar residues. Residues 313-325 (LNKKKKSKVKPKK) are compositionally biased toward basic residues. A phosphoserine mark is found at serine 336, serine 337, serine 399, and serine 402. Low complexity predominate over residues 383-399 (SSPFSSSSWKRVSSSES). HEAT repeat units lie at residues 452 to 490 (ELGSPQSVSLMTLTLKDPSPKTRACALQVLSAILEGSKQ), 514 to 552 (SSIRELHRCLLLALVAESSSQTLTQIIKCLANLVSDAPY), and 558 to 595 (SLLTKVWNQIKPYIRHKDVNVRVSSLTLLGAIVSTHAP). The disordered stretch occupies residues 613–648 (NSNSATPHLSPPDWWKKAPAGPSLEETSVSSPKGSS). A Phosphothreonine modification is found at threonine 618. A compositionally biased stretch (polar residues) spans 637–646 (EETSVSSPKG). A Phosphoserine modification is found at serine 643.

In Pongo abelii (Sumatran orangutan), this protein is HEAT repeat-containing protein 6 (HEATR6).